A 178-amino-acid polypeptide reads, in one-letter code: Large ribosomal subunit protein uL6 (178 aa).

It belongs to the universal ribosomal protein uL6 family. In terms of assembly, part of the 50S ribosomal subunit.

Its function is as follows. This protein binds to the 23S rRNA, and is important in its secondary structure. It is located near the subunit interface in the base of the L7/L12 stalk, and near the tRNA binding site of the peptidyltransferase center. The sequence is that of Large ribosomal subunit protein uL6 from Streptococcus sanguinis (strain SK36).